The chain runs to 226 residues: uncharacterized protein (226 aa).

The helical transmembrane segment at 121–141 (YLIGNIIGLPLTIPFILIPLI) threads the bilayer.

The protein to yeast YDL183c.

It localises to the membrane. This is an uncharacterized protein from Schizosaccharomyces pombe (strain 972 / ATCC 24843) (Fission yeast).